A 949-amino-acid polypeptide reads, in one-letter code: General transcription factor II-I repeat domain-containing protein 2B (949 aa).

2 GTF2I-like repeats span residues 98–192 (QVHS…QLGG) and 323–417 (LSSI…SNVG).

This sequence belongs to the TFII-I family. As to expression, ubiquitous.

It is found in the nucleus. The polypeptide is General transcription factor II-I repeat domain-containing protein 2B (GTF2IRD2B) (Homo sapiens (Human)).